The chain runs to 1010 residues: Peroxisome proliferator-activated receptor gamma coactivator 1-beta (1010 aa).

Residues methionine 1–alanine 91 are abolishes DNA transcriptional activity when missing. The disordered stretch occupies residues glycine 115–valine 134. The LXXLL motif 1 motif lies at leucine 140–leucine 144. Phosphoserine is present on residues serine 145 and serine 148. Residues leucine 156 to leucine 160 carry the LXXLL motif 2 motif. 3 disordered regions span residues serine 165–threonine 214, proline 227–lysine 282, and proline 306–arginine 329. 2 stretches are compositionally biased toward polar residues: residues threonine 178–glutamine 189 and proline 264–glutamine 279. Residues leucine 342–leucine 346 carry the LXXLL motif 3 motif. Positions threonine 369–proline 384 are enriched in polar residues. Disordered stretches follow at residues threonine 369–valine 475, glycine 517–leucine 567, and glycine 590–proline 674. Serine 383 is modified (phosphoserine). The segment covering leucine 411 to glutamate 428 has biased composition (basic and acidic residues). The span at glutamate 429–glutamate 449 shows a compositional bias: acidic residues. Residues serine 521 to glutamine 532 are compositionally biased toward low complexity. Residues proline 604 to proline 618 show a composition bias toward basic and acidic residues. Polar residues-rich tracts occupy residues glycine 619–proline 638 and glutamine 659–glycine 670. Serine 628 is subject to Phosphoserine. Residues aspartate 681 to tyrosine 684 carry the HCFC1-binding-motif (HBM) motif. Disordered stretches follow at residues histidine 714–leucine 744 and aspartate 778–arginine 881. The segment covering glutamate 782–leucine 794 has biased composition (low complexity). Over residues leucine 795–aspartate 811 the composition is skewed to acidic residues. Residues serine 832–serine 852 show a composition bias toward low complexity. The region spanning arginine 889–tyrosine 963 is the RRM domain.

In terms of assembly, interacts with estrogen receptor alpha/ESR1. Interacts with Sterol regulatory binding transcription factor 1/SREBF1, PPAR-alpha/PPARA, thyroid hormone receptor beta/THRB and host cell factor/HCFC1. Interacts with Estrogen-related receptor gamma/ESRRG and alpha/ESRRA. Interacts with PRDM16. As to expression, ubiquitous with higher expression in heart, brown adipose tissue.

It localises to the nucleus. Plays a role of stimulator of transcription factors and nuclear receptors activities. Activates transcriptional activity of estrogen receptor alpha, nuclear respiratory factor 1 (NRF1) and glucocorticoid receptor in the presence of glucocorticoids. May play a role in constitutive non-adrenergic-mediated mitochondrial biogenesis as suggested by increased basal oxygen consumption and mitochondrial number when overexpressed. May be part of the pathways regulating the elevation of gluconeogenesis, beta-oxidation of fatty acids and ketogenesis during fasting. Stimulates SREBP-mediated lipogenic gene expression in the liver. Induces energy expenditure and antagonizes obesity when overexpressed. Also induces the expression of mitochondrial genes involved in oxidative metabolism. Induces the expression of PERM1 in the skeletal muscle in an ESRRA-dependent manner. The polypeptide is Peroxisome proliferator-activated receptor gamma coactivator 1-beta (Ppargc1b) (Rattus norvegicus (Rat)).